A 382-amino-acid polypeptide reads, in one-letter code: 3-hydroxyisobutyryl-CoA hydrolase, mitochondrial (382 aa).

4 residues coordinate substrate: Glu-117, Gly-142, Glu-165, and Asp-173.

Belongs to the enoyl-CoA hydratase/isomerase family.

It is found in the mitochondrion. The enzyme catalyses 3-hydroxy-2-methylpropanoyl-CoA + H2O = 3-hydroxy-2-methylpropanoate + CoA + H(+). It functions in the pathway amino-acid degradation; L-valine degradation. Functionally, hydrolyzes 3-hydroxyisobutyryl-CoA (HIBYL-CoA), a saline catabolite. Has high activity toward isobutyryl-CoA. Could be an isobutyryl-CoA dehydrogenase that functions in valine catabolism. Also hydrolyzes 3-hydroxypropanoyl-CoA. In Danio rerio (Zebrafish), this protein is 3-hydroxyisobutyryl-CoA hydrolase, mitochondrial (hibch).